The sequence spans 717 residues: Protein Teyrha-meyrha (717 aa).

Residues 140-152 (FRTDSASPTCTSH) show a composition bias toward polar residues. 6 disordered regions span residues 140–214 (FRTD…SNPA), 229–270 (HLAA…APPV), 440–498 (KIPP…QPGK), 511–539 (SQKD…GEAP), 563–594 (DSCG…MDTA), and 624–717 (QRRQ…DTKA). The span at 195–214 (ATSSSASSSSSSSCSTSNPA) shows a compositional bias: low complexity. Residues 235–263 (PHHHPHTHAHSHPHPLAHPHAHSHHHVGH) are compositionally biased toward basic residues. Positions 442 to 451 (PPEDDAKSQE) are enriched in basic and acidic residues. Acidic residues predominate over residues 452–466 (EIETVDVESCNDEVP). Polar residues predominate over residues 471-482 (ELATPSSGSSGT). Basic and acidic residues predominate over residues 513–522 (KDPHPDEHDV). Composition is skewed to low complexity over residues 523-533 (STNVTTASSSS) and 570-580 (NDTNSSSSTHN). The span at 630–640 (QNVGSSRSLEN) shows a compositional bias: polar residues. Residues 667 to 686 (NNNNNNNNNNNNSNSNNNNN) are compositionally biased toward low complexity. A compositionally biased stretch (polar residues) spans 687–704 (PSTKYAESMENSLSQLSS).

In terms of tissue distribution, in embryos, expressed specifically in M12 (at protein level).

The protein resides in the nucleus. Functionally, required for the correct synaptic targeting of motoneurons RP5 and V to muscle 12 (M12). May be involved in the negative regulation of Tl in M12. Involved in the correct patterning of veins in the proximal (costal) region of the wing blade. This is Protein Teyrha-meyrha from Drosophila melanogaster (Fruit fly).